We begin with the raw amino-acid sequence, 162 residues long: 3-hydroxyacyl-[acyl-carrier-protein] dehydratase FabZ (162 aa).

His49 is a catalytic residue.

It belongs to the thioester dehydratase family. FabZ subfamily.

It is found in the cytoplasm. It catalyses the reaction a (3R)-hydroxyacyl-[ACP] = a (2E)-enoyl-[ACP] + H2O. Functionally, involved in unsaturated fatty acids biosynthesis. Catalyzes the dehydration of short chain beta-hydroxyacyl-ACPs and long chain saturated and unsaturated beta-hydroxyacyl-ACPs. The sequence is that of 3-hydroxyacyl-[acyl-carrier-protein] dehydratase FabZ from Solibacter usitatus (strain Ellin6076).